The primary structure comprises 203 residues: Octanoyltransferase (203 aa).

The BPL/LPL catalytic domain occupies 30 to 203; that stretch reads EDQDNYFFIT…HIIKEGRKLV (174 aa). Substrate contacts are provided by residues 69–76, 135–137, and 148–150; these read RGGSVTFH, SVG, and GIS. The active-site Acyl-thioester intermediate is C166.

Belongs to the LipB family.

Its subcellular location is the cytoplasm. It carries out the reaction octanoyl-[ACP] + L-lysyl-[protein] = N(6)-octanoyl-L-lysyl-[protein] + holo-[ACP] + H(+). The protein operates within protein modification; protein lipoylation via endogenous pathway; protein N(6)-(lipoyl)lysine from octanoyl-[acyl-carrier-protein]: step 1/2. Functionally, catalyzes the transfer of endogenously produced octanoic acid from octanoyl-acyl-carrier-protein onto the lipoyl domains of lipoate-dependent enzymes. Lipoyl-ACP can also act as a substrate although octanoyl-ACP is likely to be the physiological substrate. The protein is Octanoyltransferase of Persephonella marina (strain DSM 14350 / EX-H1).